The chain runs to 159 residues: Putative transmembrane protein ORF159 (159 aa).

2 helical membrane-spanning segments follow: residues 20–40 (LLLSLLLLLSTICGVLPLSLF) and 59–79 (IIAVDIASAICFIIFCNGFCC). Positions 106 to 108 (RGD) match the Cell attachment site motif.

It localises to the host membrane. This is Putative transmembrane protein ORF159 from Acidianus sp. F28 (AFV-2).